The primary structure comprises 206 residues: A-type ATP synthase subunit E (206 aa).

The protein belongs to the V-ATPase E subunit family. As to quaternary structure, has multiple subunits with at least A(3), B(3), C, D, E, F, H, I and proteolipid K(x).

The protein resides in the cell membrane. Component of the A-type ATP synthase that produces ATP from ADP in the presence of a proton gradient across the membrane. The protein is A-type ATP synthase subunit E of Methanothermobacter thermautotrophicus (strain ATCC 29096 / DSM 1053 / JCM 10044 / NBRC 100330 / Delta H) (Methanobacterium thermoautotrophicum).